The chain runs to 67 residues: DNA gyrase inhibitor YacG (67 aa).

Cysteine 9, cysteine 12, cysteine 28, and cysteine 32 together coordinate Zn(2+). Positions 46-67 are disordered; that stretch reads RIPSSGDLNDSDDWSEQPLDRQ.

This sequence belongs to the DNA gyrase inhibitor YacG family. In terms of assembly, interacts with GyrB. The cofactor is Zn(2+).

Its function is as follows. Inhibits all the catalytic activities of DNA gyrase by preventing its interaction with DNA. Acts by binding directly to the C-terminal domain of GyrB, which probably disrupts DNA binding by the gyrase. In Erwinia tasmaniensis (strain DSM 17950 / CFBP 7177 / CIP 109463 / NCPPB 4357 / Et1/99), this protein is DNA gyrase inhibitor YacG.